Reading from the N-terminus, the 119-residue chain is Ribosome-binding factor A (119 aa).

This sequence belongs to the RbfA family. Monomer. Binds 30S ribosomal subunits, but not 50S ribosomal subunits or 70S ribosomes.

Its subcellular location is the cytoplasm. Its function is as follows. One of several proteins that assist in the late maturation steps of the functional core of the 30S ribosomal subunit. Associates with free 30S ribosomal subunits (but not with 30S subunits that are part of 70S ribosomes or polysomes). Required for efficient processing of 16S rRNA. May interact with the 5'-terminal helix region of 16S rRNA. This chain is Ribosome-binding factor A, found in Coxiella burnetii (strain CbuK_Q154) (Coxiella burnetii (strain Q154)).